The chain runs to 546 residues: Glucose-6-phosphate isomerase (546 aa).

Residue Glu357 is the Proton donor of the active site. Catalysis depends on residues His389 and Lys509.

It belongs to the GPI family.

The protein localises to the cytoplasm. The catalysed reaction is alpha-D-glucose 6-phosphate = beta-D-fructose 6-phosphate. The protein operates within carbohydrate biosynthesis; gluconeogenesis. Its pathway is carbohydrate degradation; glycolysis; D-glyceraldehyde 3-phosphate and glycerone phosphate from D-glucose: step 2/4. Its function is as follows. Catalyzes the reversible isomerization of glucose-6-phosphate to fructose-6-phosphate. The sequence is that of Glucose-6-phosphate isomerase from Anaeromyxobacter sp. (strain K).